Reading from the N-terminus, the 326-residue chain is tRNA-modifying protein YgfZ (326 aa).

Positions 27 and 189 each coordinate folate.

It belongs to the tRNA-modifying YgfZ family.

It localises to the cytoplasm. In terms of biological role, folate-binding protein involved in regulating the level of ATP-DnaA and in the modification of some tRNAs. It is probably a key factor in regulatory networks that act via tRNA modification, such as initiation of chromosomal replication. The protein is tRNA-modifying protein YgfZ of Salmonella schwarzengrund (strain CVM19633).